A 340-amino-acid polypeptide reads, in one-letter code: Protein RecA (340 aa).

65-72 is a binding site for ATP; that stretch reads GPESGGKT.

It belongs to the RecA family.

The protein resides in the cytoplasm. In terms of biological role, can catalyze the hydrolysis of ATP in the presence of single-stranded DNA, the ATP-dependent uptake of single-stranded DNA by duplex DNA, and the ATP-dependent hybridization of homologous single-stranded DNAs. It interacts with LexA causing its activation and leading to its autocatalytic cleavage. The chain is Protein RecA from Thermus thermophilus (strain ATCC BAA-163 / DSM 7039 / HB27).